We begin with the raw amino-acid sequence, 363 residues long: L-serine dehydratase/L-threonine deaminase (363 aa).

A2 carries the post-translational modification N-acetylalanine. Position 41 is an N6-(pyridoxal phosphate)lysine (K41). Residues 74–98 form a disordered region; it reads RGRSHSGDEQPHVRSQALLPDTPSP. P164 lines the pyridoxal 5'-phosphate pocket.

Belongs to the serine/threonine dehydratase family. In terms of assembly, homodimer. Pyridoxal 5'-phosphate serves as cofactor. As to expression, predominantly expressed in the periportal regions of the liver.

It is found in the cytoplasm. It catalyses the reaction L-serine = pyruvate + NH4(+). The enzyme catalyses L-threonine = 2-oxobutanoate + NH4(+). Its pathway is carbohydrate biosynthesis; gluconeogenesis. Functionally, catalyzes the pyridoxal-phosphate-dependent dehydrative deamination of L-threonine and L-serine to ammonia and alpha-ketobutyrate and pyruvate, respectively. The sequence is that of L-serine dehydratase/L-threonine deaminase (Sds) from Rattus norvegicus (Rat).